The sequence spans 363 residues: Chorismate synthase (363 aa).

Positions 36–58 (SESDIQGDLDRRRPGQSKITTPR) are disordered. Residue arginine 47 coordinates NADP(+). Residues 124-126 (RSS), glycine 286, 301-305 (KPTAT), and arginine 327 contribute to the FMN site.

Belongs to the chorismate synthase family. As to quaternary structure, homotetramer. Requires FMNH2 as cofactor.

The enzyme catalyses 5-O-(1-carboxyvinyl)-3-phosphoshikimate = chorismate + phosphate. It functions in the pathway metabolic intermediate biosynthesis; chorismate biosynthesis; chorismate from D-erythrose 4-phosphate and phosphoenolpyruvate: step 7/7. Functionally, catalyzes the anti-1,4-elimination of the C-3 phosphate and the C-6 proR hydrogen from 5-enolpyruvylshikimate-3-phosphate (EPSP) to yield chorismate, which is the branch point compound that serves as the starting substrate for the three terminal pathways of aromatic amino acid biosynthesis. This reaction introduces a second double bond into the aromatic ring system. In Crocosphaera subtropica (strain ATCC 51142 / BH68) (Cyanothece sp. (strain ATCC 51142)), this protein is Chorismate synthase.